Reading from the N-terminus, the 512-residue chain is Phosphoenolpyruvate carboxylase (512 aa).

This sequence belongs to the PEPCase type 2 family. Homotetramer. Requires Mg(2+) as cofactor.

It carries out the reaction oxaloacetate + phosphate = phosphoenolpyruvate + hydrogencarbonate. Catalyzes the irreversible beta-carboxylation of phosphoenolpyruvate (PEP) to form oxaloacetate (OAA), a four-carbon dicarboxylic acid source for the tricarboxylic acid cycle. This chain is Phosphoenolpyruvate carboxylase, found in Caldivirga maquilingensis (strain ATCC 700844 / DSM 13496 / JCM 10307 / IC-167).